Consider the following 464-residue polypeptide: Galactose-proton symporter (464 aa).

Residues 1 to 15 (MPDAKKQGRSNKAMT) are Cytoplasmic-facing. A helical transmembrane segment spans residues 16-36 (FFVCFLAALAGLLFGLDIGVI). Over 37-56 (AGALPFIADEFQITSHTQEW) the chain is Periplasmic. A helical membrane pass occupies residues 57–77 (VVSSMMFGAAVGAVGSGWLSF). The Cytoplasmic portion of the chain corresponds to 78–84 (KLGRKKS). Residues 85–105 (LMIGAILFVAGSLFSAAAPNV) form a helical membrane-spanning segment. Topologically, residues 106–112 (EVLILSR) are periplasmic. The chain crosses the membrane as a helical span at residues 113–133 (VLLGLAVGVASYTAPLYLSEI). The Cytoplasmic portion of the chain corresponds to 134–139 (APEKIR). A helical transmembrane segment spans residues 140–160 (GSMISMYQLMITIGILGAYLS). The Periplasmic segment spans residues 161 to 171 (DTAFSYTGAWR). A helical membrane pass occupies residues 172–192 (WMLGVIIIPAILLLIGVFFLP). At 193–250 (DSPRWFAAKRRFVDAERVLLRLRDTSAEAKRELDEIRESLQVKQSGWALFKENSNFRR) the chain is on the cytoplasmic side. The chain crosses the membrane as a helical span at residues 251–271 (AVFLGVLLQVMQQFTGMNVIM). The Periplasmic portion of the chain corresponds to 272–290 (YYAPKIFELAGYTNTTEQM). A helical membrane pass occupies residues 291–311 (WGTVIVGLTNVLATFIAIGLV). Residues 312–321 (DRWGRKPTLT) lie on the Cytoplasmic side of the membrane. The helical transmembrane segment at 322-342 (LGFLVMAAGMGVLGTMMHIGI) threads the bilayer. Topologically, residues 343–351 (HSPSAQYFA) are periplasmic. The chain crosses the membrane as a helical span at residues 352–372 (IAMLLMFIVGFAMSAGPLIWV). Over 373 to 394 (LCSEIQPLKGRDFGITCSTATN) the chain is Cytoplasmic. A helical transmembrane segment spans residues 395 to 415 (WIANMIVGATFLTMLNTLGNA). A topological domain (periplasmic) is located at residue asparagine 416. The helical transmembrane segment at 417–437 (TFWVYAALNVLFILLTLWLVP) threads the bilayer. The Cytoplasmic portion of the chain corresponds to 438-464 (ETKHVSLEHIERNLMKGRKLREIGAHD).

It belongs to the major facilitator superfamily. Sugar transporter (TC 2.A.1.1) family.

The protein localises to the cell inner membrane. In terms of biological role, uptake of galactose across the boundary membrane with the concomitant transport of protons into the cell (symport system). The sequence is that of Galactose-proton symporter (galP) from Escherichia coli O6:H1 (strain CFT073 / ATCC 700928 / UPEC).